The following is a 756-amino-acid chain: Polyribonucleotide nucleotidyltransferase (756 aa).

Mg(2+)-binding residues include Asp-492 and Asp-498. Residues Pro-559–Val-618 form the KH domain. The S1 motif domain occupies Gly-628–Gln-702. Residues Gly-703–Arg-756 form a disordered region. Residues Pro-718–Arg-756 show a composition bias toward basic and acidic residues.

It belongs to the polyribonucleotide nucleotidyltransferase family. It depends on Mg(2+) as a cofactor.

Its subcellular location is the cytoplasm. The enzyme catalyses RNA(n+1) + phosphate = RNA(n) + a ribonucleoside 5'-diphosphate. Involved in mRNA degradation. Catalyzes the phosphorolysis of single-stranded polyribonucleotides processively in the 3'- to 5'-direction. This chain is Polyribonucleotide nucleotidyltransferase, found in Nitratidesulfovibrio vulgaris (strain DSM 19637 / Miyazaki F) (Desulfovibrio vulgaris).